Consider the following 340-residue polypeptide: Delta(1)-pyrroline-2-carboxylate reductase 2 (340 aa).

The active-site Charge relay system is Ser-50. His-51 acts as the Proton donor in catalysis. Arg-55 lines the substrate pocket. 123 to 127 (HFSAL) contacts NADP(+). Residue Thr-163 participates in substrate binding. 181–183 (DFA) provides a ligand contact to NADP(+). A substrate-binding site is contributed by 189–190 (RG). Asp-191 serves as the catalytic Charge relay system. NADP(+) contacts are provided by residues 232-233 (HK) and 307-313 (RLPSQRR).

Belongs to the LDH2/MDH2 oxidoreductase family. As to quaternary structure, homodimer.

The enzyme catalyses L-proline + NAD(+) = 1-pyrroline-2-carboxylate + NADH + H(+). The catalysed reaction is L-proline + NADP(+) = 1-pyrroline-2-carboxylate + NADPH + H(+). Its function is as follows. Catalyzes the reduction of Delta(1)-pyrroline-2-carboxylate (Pyr2C) to L-proline, using NADPH as the electron donor. May be involved in a degradation pathway that converts trans-3-hydroxy-L-proline (t3LHyp) to L-proline. The polypeptide is Delta(1)-pyrroline-2-carboxylate reductase 2 (Burkholderia multivorans (strain ATCC 17616 / 249)).